The following is a 103-amino-acid chain: Large ribosomal subunit protein bL21 (103 aa).

Belongs to the bacterial ribosomal protein bL21 family. As to quaternary structure, part of the 50S ribosomal subunit. Contacts protein L20.

Functionally, this protein binds to 23S rRNA in the presence of protein L20. In Cupriavidus metallidurans (strain ATCC 43123 / DSM 2839 / NBRC 102507 / CH34) (Ralstonia metallidurans), this protein is Large ribosomal subunit protein bL21.